The primary structure comprises 256 residues: Imidazole glycerol phosphate synthase subunit hisF1 (256 aa).

Catalysis depends on residues Asp12 and Asp131.

Belongs to the HisA/HisF family. Heterodimer of HisH and HisF.

The protein localises to the cytoplasm. The catalysed reaction is 5-[(5-phospho-1-deoxy-D-ribulos-1-ylimino)methylamino]-1-(5-phospho-beta-D-ribosyl)imidazole-4-carboxamide + L-glutamine = D-erythro-1-(imidazol-4-yl)glycerol 3-phosphate + 5-amino-1-(5-phospho-beta-D-ribosyl)imidazole-4-carboxamide + L-glutamate + H(+). It participates in amino-acid biosynthesis; L-histidine biosynthesis; L-histidine from 5-phospho-alpha-D-ribose 1-diphosphate: step 5/9. Its function is as follows. IGPS catalyzes the conversion of PRFAR and glutamine to IGP, AICAR and glutamate. The HisF subunit catalyzes the cyclization activity that produces IGP and AICAR from PRFAR using the ammonia provided by the HisH subunit. This Pseudomonas aeruginosa (strain ATCC 15692 / DSM 22644 / CIP 104116 / JCM 14847 / LMG 12228 / 1C / PRS 101 / PAO1) protein is Imidazole glycerol phosphate synthase subunit hisF1 (hisF1).